Consider the following 506-residue polypeptide: Histidine ammonia-lyase (506 aa).

Positions 143–145 form a cross-link, 5-imidazolinone (Ala-Gly); the sequence is ASG. The residue at position 144 (S144) is a 2,3-didehydroalanine (Ser).

It belongs to the PAL/histidase family. In terms of processing, contains an active site 4-methylidene-imidazol-5-one (MIO), which is formed autocatalytically by cyclization and dehydration of residues Ala-Ser-Gly.

The protein localises to the cytoplasm. The catalysed reaction is L-histidine = trans-urocanate + NH4(+). The protein operates within amino-acid degradation; L-histidine degradation into L-glutamate; N-formimidoyl-L-glutamate from L-histidine: step 1/3. The protein is Histidine ammonia-lyase of Salmonella agona (strain SL483).